The primary structure comprises 946 residues: Ent-kaur-16-ene synthase (946 aa).

Residues Asp656, Glu660, Asn839, Asp840, Ser843, and Asp847 each coordinate Mg(2+). A DEXXE motif motif is present at residues 656–660 (DEFFE).

Belongs to the terpene synthase family. Mg(2+) serves as cofactor.

It carries out the reaction ent-copalyl diphosphate = ent-kaur-16-ene + diphosphate. The enzyme catalyses (2E,6E,10E)-geranylgeranyl diphosphate = ent-copalyl diphosphate. It participates in plant hormone biosynthesis; gibberellin biosynthesis. In terms of biological role, catalyzes the conversion of geranylgeranyl diphosphate to the gibberellin precursor ent-kaurene diphosphate in a two step process. The sequence is that of Ent-kaur-16-ene synthase from Phaeosphaeria sp. (strain L487).